Here is a 2167-residue protein sequence, read N- to C-terminus: RNA editing associated helicase 2 (2167 aa).

The transit peptide at 1–30 directs the protein to the mitochondrion; the sequence is MRAIRLTVACRYLGPFRSVTLSPVVLPVRL. Disordered stretches follow at residues 503-593 and 937-969; these read RARG…DEAT and ENAT…PTNV. Residues 532-541 show a composition bias toward low complexity; the sequence is SSTQTPSSST. A DRBM domain is found at 1024–1095; sequence DAKTVLQRYC…AMHALALLRR (72 aa). The region spanning 1348–1513 is the Helicase ATP-binding domain; the sequence is LRAISSNQIV…FGNAPIINVE (166 aa). 1361 to 1368 provides a ligand contact to ATP; it reads GTTGCGKT. The Important for binding to gRNA signature appears at 1366 to 1367; it reads GK. Positions 1460–1463 match the DEAH box motif; sequence DEIH. The Helicase C-terminal domain maps to 1585–1762; sequence AIDHAVRSLD…SLCLQILALD (178 aa). The disordered stretch occupies residues 2132 to 2167; that stretch reads IIEPCTEPKGGSSEAEKTHVNSSHTPTTSAEAGGDS. Residues 2151–2161 show a composition bias toward polar residues; it reads VNSSHTPTTSA.

This sequence belongs to the DEAD box helicase family. DEAH subfamily. In terms of assembly, component of the REH2-associated complex (REH2C) composed of helicase REH2, associated factors H2F1 and H2F2, and mRNAs at various editing stages; the formation of the complex is RNA-independent. Within the complex, interacts with H2F1; the interaction is direct. Interacts transiently, in a RNA-dependent manner, with various editing complexes including the RNA editing core (RECC) complex, the gRNA-binding (GRBC) complex (also known as the MRB1 complex) and the RNA editing mediator (REMC) complex. Interacts with GAP1/GRBC2 via RNA forming a variant of the GRBC complex known as REH2-GRBC complex. Interacts with mitochondrial ribosomes.

The protein localises to the mitochondrion. The enzyme catalyses ATP + H2O = ADP + phosphate + H(+). ATP-dependent RNA helicase that unwinds RNA in a 3' to 5' direction and that plays an important role in mitochondrial mRNA editing, a process involving the addition and deletion of uridine (U) nucleotides in the pre-mRNA. As part of the RET2-containing gRNA-binding (RET2-GRBC) complex, acts as a scaffold for the assembly of mRNA-gRNA hybrids and the recruitment of the RNA editing core (RECC) complex. Regulates several steps of mRNA editing by the MRBC3010/GRBC6 containing gRNA-binding (MRBC3010-GRBC) complex including loading of unedited mRNA, editing in the first sequence block and subsequent editing progression across multiple sequence blocks. Also, regulates the RNA substrate content of the MRBC3010-GRBC complex as well as the association of this complex with mitoribosomes. This Trypanosoma brucei brucei (strain 927/4 GUTat10.1) protein is RNA editing associated helicase 2.